The chain runs to 171 residues: Ribosome maturation factor RimM (171 aa).

The region spanning 96-168 is the PRC barrel domain; that stretch reads EDGFYDHELE…TATITPPEGL (73 aa).

This sequence belongs to the RimM family. In terms of assembly, binds ribosomal protein uS19.

It is found in the cytoplasm. Its function is as follows. An accessory protein needed during the final step in the assembly of 30S ribosomal subunit, possibly for assembly of the head region. Essential for efficient processing of 16S rRNA. May be needed both before and after RbfA during the maturation of 16S rRNA. It has affinity for free ribosomal 30S subunits but not for 70S ribosomes. The polypeptide is Ribosome maturation factor RimM (Corynebacterium glutamicum (strain R)).